The primary structure comprises 288 residues: uncharacterized protein (288 aa).

It to M.bovis Mb1522c, M.leprae ML1804 and M.avium MAV321.

This is an uncharacterized protein from Mycobacterium tuberculosis (strain ATCC 25618 / H37Rv).